The sequence spans 386 residues: 8-amino-7-oxononanoate synthase (386 aa).

Substrate is bound at residue R31. 109–110 (GY) contacts pyridoxal 5'-phosphate. H134 contacts substrate. Pyridoxal 5'-phosphate contacts are provided by residues S180, 205–208 (DEAH), and 236–239 (TLSK). K239 carries the post-translational modification N6-(pyridoxal phosphate)lysine. A substrate-binding site is contributed by T349.

Belongs to the class-II pyridoxal-phosphate-dependent aminotransferase family. BioF subfamily. Homodimer. Pyridoxal 5'-phosphate serves as cofactor.

It carries out the reaction 6-carboxyhexanoyl-[ACP] + L-alanine + H(+) = (8S)-8-amino-7-oxononanoate + holo-[ACP] + CO2. It functions in the pathway cofactor biosynthesis; biotin biosynthesis. Its function is as follows. Catalyzes the decarboxylative condensation of pimeloyl-[acyl-carrier protein] and L-alanine to produce 8-amino-7-oxononanoate (AON), [acyl-carrier protein], and carbon dioxide. The protein is 8-amino-7-oxononanoate synthase of Mycobacterium bovis (strain ATCC BAA-935 / AF2122/97).